We begin with the raw amino-acid sequence, 390 residues long: Malonyl-CoA-acyl carrier protein transacylase, mitochondrial (390 aa).

A mitochondrion-targeting transit peptide spans 1 to 21; the sequence is MSVRVARVAWVRGLGASYRRG. Residues Ser153 and His270 contribute to the active site. Lys314 is modified (N6-succinyllysine).

The protein belongs to the type II malonyltransferase family.

It localises to the mitochondrion. It carries out the reaction holo-[ACP] + malonyl-CoA = malonyl-[ACP] + CoA. The protein operates within lipid metabolism; fatty acid biosynthesis. Catalyzes the transfer of a malonyl moiety from malonyl-CoA to the free thiol group of the phosphopantetheine arm of the mitochondrial ACP protein (NDUFAB1). This suggests the existence of the biosynthesis of fatty acids in mitochondria. Also acts as a mitochondrial small ribosomal subunit (mt-SSU) assembly factor. The sequence is that of Malonyl-CoA-acyl carrier protein transacylase, mitochondrial from Homo sapiens (Human).